Reading from the N-terminus, the 162-residue chain is Large ribosomal subunit protein uL10 (162 aa).

Belongs to the universal ribosomal protein uL10 family. As to quaternary structure, part of the ribosomal stalk of the 50S ribosomal subunit. The N-terminus interacts with L11 and the large rRNA to form the base of the stalk. The C-terminus forms an elongated spine to which L12 dimers bind in a sequential fashion forming a multimeric L10(L12)X complex.

Its function is as follows. Forms part of the ribosomal stalk, playing a central role in the interaction of the ribosome with GTP-bound translation factors. This is Large ribosomal subunit protein uL10 from Borrelia duttonii (strain Ly).